Reading from the N-terminus, the 197-residue chain is Recombination protein RecR (197 aa).

The C4-type zinc-finger motif lies at 56–71; that stretch reads CSRCFNLSAEDPCDIC. The Toprim domain occupies 79-174; sequence ETICVVAEPR…RVTRIAFGLP (96 aa).

This sequence belongs to the RecR family.

In terms of biological role, may play a role in DNA repair. It seems to be involved in an RecBC-independent recombinational process of DNA repair. It may act with RecF and RecO. This chain is Recombination protein RecR, found in Gloeobacter violaceus (strain ATCC 29082 / PCC 7421).